Reading from the N-terminus, the 375-residue chain is 23S rRNA (uracil(747)-C(5))-methyltransferase RlmC (375 aa).

Positions 3, 11, 14, and 87 each coordinate [4Fe-4S] cluster. S-adenosyl-L-methionine is bound by residues Gln-212, Phe-241, Glu-262, and Asn-307. The active-site Nucleophile is the Cys-334.

The protein belongs to the class I-like SAM-binding methyltransferase superfamily. RNA M5U methyltransferase family. RlmC subfamily.

The enzyme catalyses uridine(747) in 23S rRNA + S-adenosyl-L-methionine = 5-methyluridine(747) in 23S rRNA + S-adenosyl-L-homocysteine + H(+). In terms of biological role, catalyzes the formation of 5-methyl-uridine at position 747 (m5U747) in 23S rRNA. This Escherichia coli O139:H28 (strain E24377A / ETEC) protein is 23S rRNA (uracil(747)-C(5))-methyltransferase RlmC.